Here is a 452-residue protein sequence, read N- to C-terminus: 23S rRNA (uracil(1939)-C(5))-methyltransferase RlmD (452 aa).

Positions 1–25 (MSKKKSNSGLRFQPAGGNRTPQVPV) are disordered. Positions 22–80 (QVPVGKKQRLDIERLAGDGRGIAFLDGRTWFVSGALAGEAVEARVLNARGKVVEARLER) constitute a TRAM domain. 4 residues coordinate [4Fe-4S] cluster: cysteine 93, cysteine 99, cysteine 102, and cysteine 181. 6 residues coordinate S-adenosyl-L-methionine: glutamine 285, phenylalanine 314, asparagine 319, glutamate 335, aspartate 362, and aspartate 383. Cysteine 409 (nucleophile) is an active-site residue.

This sequence belongs to the class I-like SAM-binding methyltransferase superfamily. RNA M5U methyltransferase family. RlmD subfamily.

The enzyme catalyses uridine(1939) in 23S rRNA + S-adenosyl-L-methionine = 5-methyluridine(1939) in 23S rRNA + S-adenosyl-L-homocysteine + H(+). Catalyzes the formation of 5-methyl-uridine at position 1939 (m5U1939) in 23S rRNA. This chain is 23S rRNA (uracil(1939)-C(5))-methyltransferase RlmD, found in Pseudomonas putida (strain ATCC 47054 / DSM 6125 / CFBP 8728 / NCIMB 11950 / KT2440).